Here is a 196-residue protein sequence, read N- to C-terminus: SAGA-associated factor 11 homolog (196 aa).

The segment at 1-22 (MSAANMPTTTGAQGSGNQVPTT) is disordered. The SGF11-type zinc-finger motif lies at 106 to 127 (CTCPNCDRLVAAARFAPHLEKC). Residues 144 to 196 (TKEGASSAHLHSAGNAGGTDDEDDVDWSSDKRRKKSNQNSRNNGSKKNNGKTF) are disordered. Ser172 is subject to Phosphoserine. The segment covering 180 to 196 (NQNSRNNGSKKNNGKTF) has biased composition (low complexity).

This sequence belongs to the SGF11 family. As to quaternary structure, component of some SAGA transcription coactivator-HAT complexes, at least composed of Ada2b, not/nonstop, Pcaf/Gcn5, Sgf11 and Spt3. Within the SAGA complex, Sgf11, e(y)2, and not/nonstop form an additional subcomplex of SAGA called the DUB module (deubiquitination module). Interacts directly with not/nonstop. Interacts with the AMEX complex component xmas-2. Interacts with Cbp80; important for promoter recruitment of Sgf11 that is not associated with the DUB module.

It localises to the nucleus. It is found in the nucleoplasm. The protein resides in the cytoplasm. Component of the transcription regulatory histone acetylation (HAT) complex SAGA, a multiprotein complex that activates transcription by remodeling chromatin and mediating histone acetylation and deubiquitination. Within the SAGA complex, participates in a subcomplex that specifically deubiquitinates histone H2B. The SAGA complex is recruited to specific gene promoters by activators, where it is required for transcription. Required for nuclear receptor-mediated transactivation. Binds independently on SAGA to promoters in an RNA-dependent manner. Binds to mRNA and is essential for total mRNA export from the nucleus. Required to counteract heterochromatin silencing. Controls the development of neuronal connectivity in visual system by being required for accurate axon targeting in the optic lobe. Required for expression of ecdysone-induced genes such as br/broad. This chain is SAGA-associated factor 11 homolog, found in Drosophila yakuba (Fruit fly).